The chain runs to 424 residues: Histidine--tRNA ligase (424 aa).

The protein belongs to the class-II aminoacyl-tRNA synthetase family. In terms of assembly, homodimer.

The protein localises to the cytoplasm. The enzyme catalyses tRNA(His) + L-histidine + ATP = L-histidyl-tRNA(His) + AMP + diphosphate + H(+). The sequence is that of Histidine--tRNA ligase from Escherichia coli O17:K52:H18 (strain UMN026 / ExPEC).